Reading from the N-terminus, the 208-residue chain is 2-phospho-L-lactate guanylyltransferase (208 aa).

Belongs to the CofC family. As to quaternary structure, homodimer.

It carries out the reaction (2S)-2-phospholactate + GTP + H(+) = (2S)-lactyl-2-diphospho-5'-guanosine + diphosphate. The protein operates within cofactor biosynthesis; coenzyme F420 biosynthesis. In terms of biological role, guanylyltransferase that catalyzes the activation of (2S)-2-phospholactate (2-PL) as (2S)-lactyl-2-diphospho-5'-guanosine, via the condensation of 2-PL with GTP. It is involved in the biosynthesis of coenzyme F420, a hydride carrier cofactor. In Haloarcula marismortui (strain ATCC 43049 / DSM 3752 / JCM 8966 / VKM B-1809) (Halobacterium marismortui), this protein is 2-phospho-L-lactate guanylyltransferase.